Here is a 293-residue protein sequence, read N- to C-terminus: Ribosomal protein L11 methyltransferase (293 aa).

Threonine 145, glycine 166, aspartate 188, and asparagine 230 together coordinate S-adenosyl-L-methionine.

This sequence belongs to the methyltransferase superfamily. PrmA family.

It localises to the cytoplasm. The catalysed reaction is L-lysyl-[protein] + 3 S-adenosyl-L-methionine = N(6),N(6),N(6)-trimethyl-L-lysyl-[protein] + 3 S-adenosyl-L-homocysteine + 3 H(+). Its function is as follows. Methylates ribosomal protein L11. The protein is Ribosomal protein L11 methyltransferase of Escherichia coli O7:K1 (strain IAI39 / ExPEC).